The sequence spans 1071 residues: MAKDQSMSRTASLCQEITVPKTIPVCIQDVFYRRVLEQHDAPAVCAWDGELTYGELDDKSSSLARILAQKGIHRGSFVPLCFDRSLWTAVAMLAVLKAGGVFCFLEPKYPLARLEHMCRHINAKMVLSGESRSELARKLGEHLAVNEDLLATSPSDQELVDVAPNQAAYVAFTSGSTGKPKGILVSHQALVAGILYNDKPMYLNRTSRVLSFASFAFDVSFLEHFWALLVGGCMCIPSESDRENNLLEAIENLQVNWAFLTPSVARVLNPTKLPSLRHLIMGGEPITQTDIDMWSPHVHLIGVYGPAECAGCTTIQSDYGKVESAANIGFPYAVTCWIVDENNHNVLVPTGSIGELVVQGPSLSEGYVNDPEQSAKSYITNPLWLSGSKEAEQQLYKTGDLVRRLSDGSLHFISRKDTQVKINGQRIELGEVEHHTRAVLGGNREVIVEAVKAGRPSSSLVAFIVTDNIPQSSTELFLAPDAGFKDRINTTKSLLRERLPDYMVPETYISINHLPSTVTGKADRKRLREQFTLLTRAQIKAYFGLEDKVKVMPLTEIELKMQRLWAKVLNLDLHEIARDDDWVSLGGDSLGAMQLASLARSEQFFLTVPEIFRHKTISMLCQNIKTDVSETIEEMKPFALLCDHELESDRILQTIADQCQVSQNSIEDAYPITSLQLDASIIPIQWGLNYTLRLEFKLPPTVDPAQLTLAWEMTVASNPVLRTRIVELTKDHYIQAVIRSKIPLENLDSSNMARYEPAVDVWGIGKPLVRVGLQANRFVMLIHHAIYDGQSLPLVFRDISNAYQGQKLALIHFAPFVRWSKSLDAPKRQFWIDKFAGFDGRVFPPVLDPSLDPVESRELTGHLNIVHDAFTATNKIRVTLAIVISWHHGTNDVVFGGVFARRSAPIPDIIDSAVPTTAMLPDRIKLDPDETLRYNLERDQDNILSLMLHEGIDDRDIEQLSPECEAVACKYGTLLAVQPDLATAYPEMFRERDMQYYGPICALNALMQCYLSPESATISLRLSESTMDGVYHWGRFLDEFEAVFHFIQKNPDVKLCYLRRQLDIPNPRSPA.

An adenylation region spans residues 33 to 417 (RRVLEQHDAP…GSLHFISRKD (385 aa)). In terms of domain architecture, Carrier spans 552–628 (MPLTEIELKM…MLCQNIKTDV (77 aa)). An O-(pantetheine 4'-phosphoryl)serine modification is found at S589. The interval 689–961 (NYTLRLEFKL…IDDRDIEQLS (273 aa)) is condensation.

The protein belongs to the NRP synthetase family.

The enzyme catalyses (2S)-5,5-dimethylpiperidine-2-carboxylate + 10-hydroxy-pre-flavunoidine + ATP = flavunoidine + AMP + diphosphate + H(+). It participates in secondary metabolite biosynthesis; terpenoid biosynthesis. Nonribosomal peptide synthetase; part of the gene cluster that mediates the biosynthesis of flavunoidine, an alkaloidal terpenoid with a tetracyclic cage-like core connected to dimethylcadaverine via a C-N bond and acylated with 5,5-dimethyl-L-pipecolate. The tetracyclic core is synthesized by the terpene cyclase flvE and the cytochrome P450 monooxygenase flvD. The terpene cyclase flvE catalyzes the cyclization of farnesyl pyrophosphate (FPP) to form (1R,4R,5S)-(+)-acoradiene and the cytochrome P450 monooxygenase flvD is then responsible for oxidative conversion of (1R,4R,5S)-(+)-acoradiene into the tetracyclic cage present in the final product flavunoidine. In parallel, the N-methyltransferase flvH dimethylates L-lysine to give N,N-dimethyl-L-Lysin which is decarboxylated by flvG to afford dimethylcadaverine. The terpene cyclase-like protein flvF is the enzyme that attaches the dimethylcadaverine precusor at the C-7 of the tetracyclic cage to yield pre-flavunoidine. The cytochrome monooxygenase flvC hydroxylates the C-10 position of pre-flavunoidine whereas the NRPS flvI acylates the terpenoid core at the hydroxylated C-10 with dimethylpipecolate to yield final flavunoidine. The bifunctional enzyme flvA and the dehydrogenase flvB are responsible for the synthesis of the dimethylpipecolate precursor. The PLP-dependent lyase domain of flvA might use L-O-acetyl-homoserine and alpha-keto-isovalerate to form an intermediary ketone that can cyclize intramolecularly to yield an imine. The imine can be reduced by flvB to yield the 6-carboxylated pipecolate. The C-terminal alpha-KG-dependent oxygenase domain of flvA is then proposed to catalyze the decarboxylation to yield dimethylpipecolate. In Aspergillus flavus (strain ATCC 200026 / FGSC A1120 / IAM 13836 / NRRL 3357 / JCM 12722 / SRRC 167), this protein is Nonribosomal peptide synthetase flvI.